The chain runs to 62 residues: Conotoxin Pn-B0151 (62 aa).

A signal peptide spans 1-22 (MRCLPVFVILLLLIASTPSVDA). A propeptide spanning residues 23 to 48 (LQKTKDDMPLASFHDNVKRILQTLSN) is cleaved from the precursor.

The protein belongs to the conotoxin T superfamily. Post-translationally, contains 2 disulfide bonds that can be either 'C1-C3, C2-C4' or 'C1-C4, C2-C3', since these disulfide connectivities have been observed for conotoxins with cysteine framework V (for examples, see AC P0DQQ7 and AC P81755). As to expression, expressed by the venom duct.

The protein localises to the secreted. This is Conotoxin Pn-B0151 from Conus pennaceus (Feathered cone).